A 384-amino-acid polypeptide reads, in one-letter code: Galactokinase (384 aa).

A substrate-binding site is contributed by 34 to 37; that stretch reads EHTD. Position 123–129 (123–129) interacts with ATP; it reads SSGLSSS. S129 and E161 together coordinate Mg(2+). D173 acts as the Proton acceptor in catalysis. A substrate-binding site is contributed by Y222.

It belongs to the GHMP kinase family. GalK subfamily.

The protein resides in the cytoplasm. It carries out the reaction alpha-D-galactose + ATP = alpha-D-galactose 1-phosphate + ADP + H(+). Its pathway is carbohydrate metabolism; galactose metabolism. Functionally, catalyzes the transfer of the gamma-phosphate of ATP to D-galactose to form alpha-D-galactose-1-phosphate (Gal-1-P). The protein is Galactokinase of Glaesserella parasuis serovar 5 (strain SH0165) (Haemophilus parasuis).